Reading from the N-terminus, the 369-residue chain is Homoserine O-acetyltransferase (369 aa).

An AB hydrolase-1 domain is found at 44–350 (NAILVAHAWT…AYGHDAFLLE (307 aa)). The active-site Nucleophile is serine 150. Arginine 217 lines the substrate pocket. Active-site residues include aspartate 311 and histidine 344. Aspartate 345 provides a ligand contact to substrate.

It belongs to the AB hydrolase superfamily. MetX family. In terms of assembly, homodimer.

The protein localises to the cytoplasm. It carries out the reaction L-homoserine + acetyl-CoA = O-acetyl-L-homoserine + CoA. Its pathway is amino-acid biosynthesis; L-methionine biosynthesis via de novo pathway; O-acetyl-L-homoserine from L-homoserine: step 1/1. Transfers an acetyl group from acetyl-CoA to L-homoserine, forming acetyl-L-homoserine. The polypeptide is Homoserine O-acetyltransferase (Geobacter metallireducens (strain ATCC 53774 / DSM 7210 / GS-15)).